The following is a 251-amino-acid chain: Probable transcriptional regulatory protein TGRD_462 (251 aa).

Belongs to the TACO1 family.

The protein localises to the cytoplasm. The protein is Probable transcriptional regulatory protein TGRD_462 of Endomicrobium trichonymphae.